The primary structure comprises 434 residues: Urokinase-type plasminogen activator (434 aa).

The first 20 residues, 1 to 20, serve as a signal peptide directing secretion; that stretch reads MKLIIFLTVTLCTLVTGLDS. The region spanning 36-72 is the EGF-like domain; that stretch reads QHRECQCLNGGTCITYRFFSQIKRCLCPEGYGGLHCE. 12 disulfides stabilise this stretch: cysteine 40/cysteine 48, cysteine 42/cysteine 60, cysteine 62/cysteine 71, cysteine 79/cysteine 158, cysteine 96/cysteine 139, cysteine 128/cysteine 152, cysteine 162/cysteine 296, cysteine 202/cysteine 218, cysteine 210/cysteine 285, cysteine 310/cysteine 379, cysteine 342/cysteine 358, and cysteine 369/cysteine 397. One can recognise a Kringle domain in the interval 79-158; it reads CYSGNGEDYR…ETPCSTIEKC (80 aa). The connecting peptide stretch occupies residues 159 to 172; sequence ERTCGQRSFSKYFK. Positions 173 to 421 constitute a Peptidase S1 domain; sequence IVGGSQAEVE…YLNWIDSNMN (249 aa). Histidine 217 (charge relay system) is an active-site residue. Residue asparagine 228 is glycosylated (N-linked (GlcNAc...) asparagine). The active-site Charge relay system is aspartate 272. The active-site Charge relay system is serine 373.

It belongs to the peptidase S1 family.

It is found in the secreted. It catalyses the reaction Specific cleavage of Arg-|-Val bond in plasminogen to form plasmin.. Specifically cleaves the zymogen plasminogen to form the active enzyme plasmin. This Gallus gallus (Chicken) protein is Urokinase-type plasminogen activator (PLAU).